The primary structure comprises 392 residues: tRNA (guanine-N(7)-)-methyltransferase (392 aa).

S-adenosyl-L-methionine is bound by residues glutamate 123, glutamate 148, and aspartate 175. Substrate is bound by residues lysine 201 and aspartate 231.

It belongs to the class I-like SAM-binding methyltransferase superfamily. TrmB family.

It catalyses the reaction guanosine(46) in tRNA + S-adenosyl-L-methionine = N(7)-methylguanosine(46) in tRNA + S-adenosyl-L-homocysteine. It functions in the pathway tRNA modification; N(7)-methylguanine-tRNA biosynthesis. Catalyzes the formation of N(7)-methylguanine at position 46 (m7G46) in tRNA. The chain is tRNA (guanine-N(7)-)-methyltransferase from Campylobacter jejuni subsp. doylei (strain ATCC BAA-1458 / RM4099 / 269.97).